The sequence spans 522 residues: MTPNIHHDKILILDFGAQYTQLIARRIREIGVYCEVWPWDHSPEEILSFGAKGIILSGGPESTTSPGAPAAPQHVFDSDLPIFGICYGMQTMAVHLGGATEAADKREFGHASVQVIYPDTLFSGLSDHPSEFRLDVWMSHGDHVSRVPPGFTITAATDRIPIAAMSREDKRWYGVQFHPEVTHTLQGQALLRRFVVDICGCQTLWTAANIIEDQIARVRERVGRDEVILGLSGGVDSSVVAALLHKAIGSQLTCVFVDTGLLRWGEGDQVMAMFEEHMGVNVVRINAASRYFDALQGVYDPEAKRKIIGNLFIQIFEEEASKRKQAKWLAQGTIYPDVIESAGSKTGKAHVIKSHHNVGGLPEQMTLGMVEPLRELFKDEVRRLGVALGLPHAMVYRHPFPGPGLGVRILGEVKPEYAELLAKADSIFIDELHQADLYDKVSQAFAVFLPVKSVGVVGDARAYEWVIALRAVETVDFMTAHWAPLPYDFLSTVSNRIINELRGVSRVVYDISGKPPATIEWE.

The 196-residue stretch at 9–204 (KILILDFGAQ…VVDICGCQTL (196 aa)) folds into the Glutamine amidotransferase type-1 domain. The active-site Nucleophile is the cysteine 86. Active-site residues include histidine 178 and glutamate 180. A GMPS ATP-PPase domain is found at 205-397 (WTAANIIEDQ…LGLPHAMVYR (193 aa)). 232 to 238 (SGGVDSS) contributes to the ATP binding site.

Homodimer.

It catalyses the reaction XMP + L-glutamine + ATP + H2O = GMP + L-glutamate + AMP + diphosphate + 2 H(+). It functions in the pathway purine metabolism; GMP biosynthesis; GMP from XMP (L-Gln route): step 1/1. Functionally, catalyzes the synthesis of GMP from XMP. The sequence is that of GMP synthase [glutamine-hydrolyzing] from Xylella fastidiosa (strain M12).